Reading from the N-terminus, the 460-residue chain is Equilibrative nucleoside transporter 1 (460 aa).

The Cytoplasmic portion of the chain corresponds to 1-12 (MTTSHQPQDRYK). Residues 13 to 29 (AVWLIFFVLGLGTLLPW) form a helical membrane-spanning segment. Residues 30–82 (NFFMTATKYFTNRLDVSQNVSSDTDQSCESTKALADPTVALPARSSLSAIFNN) lie on the Extracellular side of the membrane. The N-linked (GlcNAc...) asparagine glycan is linked to N48. A helical transmembrane segment spans residues 83–107 (VMTLCAMLPLLVFTCLNSFLHQRIS). The Cytoplasmic segment spans residues 108–111 (QSVR). A helical membrane pass occupies residues 112 to 130 (ILGSLLAILLVFLVTAALV). Topologically, residues 131-138 (KVEMDALI) are extracellular. Residues 139–157 (FFVITMIKIVLINSFGAIL) traverse the membrane as a helical segment. Residues 158 to 174 (QASLFGLAGVLPANYTA) are Cytoplasmic-facing. Residues 175 to 199 (PIMSGQGLAGFFTSVAMICAIASGS) traverse the membrane as a helical segment. Residues 200–206 (ELSESAF) lie on the Extracellular side of the membrane. Residues 207-227 (GYFITACAVVILAILCYLALP) form a helical membrane-spanning segment. Topologically, residues 228-291 (RTEFYRHYLQ…IKAILKSICV (64 aa)) are cytoplasmic. S254 is subject to Phosphoserine. Over residues 255–266 (KGEEPKGRREES) the composition is skewed to basic and acidic residues. Residues 255 to 277 (KGEEPKGRREESGVPGPNSPPTN) are disordered. S273 bears the Phosphoserine mark. Residues 292 to 311 (PALSVCFIFTVTIGLFPAVT) traverse the membrane as a helical segment. Residues 312 to 323 (AEVESSIAGTSP) are Extracellular-facing. A helical transmembrane segment spans residues 324–342 (WKSYFIPVACFLNFNVFDW). At 343-359 (LGRSLTAVCMWPGQDSR) the chain is on the cytoplasmic side. A helical membrane pass occupies residues 360–378 (WLPVLVASRIVFIPLLMLC). Over 379–397 (NVKARHCGAQRHHFVFKHD) the chain is Extracellular. Residues 398-417 (AWFIAFMAAFAFSNGYLASL) form a helical membrane-spanning segment. The Cytoplasmic portion of the chain corresponds to 418–435 (CMCFGPKKVKPAEAETAG). Residues 436-456 (NIMSFFLCLGLALGAVLSFLL) form a helical membrane-spanning segment. At 457 to 460 (RALV) the chain is on the extracellular side.

This sequence belongs to the SLC29A/ENT transporter (TC 2.A.57) family. Identified in a complex with STOM. Post-translationally, glycosylated. Highly expressed in heart, spleen, lung, liver and testis. Lower level of expression in brain and kidney. Expressed in adipose tissues, brown adipocytes expressing significantly higher amounts than white adipocytes. Expressed in seminiferous tubules.

The protein resides in the basolateral cell membrane. It is found in the apical cell membrane. It localises to the cell membrane. The catalysed reaction is adenosine(in) = adenosine(out). It carries out the reaction guanosine(in) = guanosine(out). It catalyses the reaction inosine(in) = inosine(out). The enzyme catalyses uridine(out) = uridine(in). The catalysed reaction is thymidine(in) = thymidine(out). It carries out the reaction cytidine(in) = cytidine(out). It catalyses the reaction adenine(out) = adenine(in). The enzyme catalyses guanine(out) = guanine(in). The catalysed reaction is thymine(out) = thymine(in). It carries out the reaction uracil(in) = uracil(out). It catalyses the reaction hypoxanthine(out) = hypoxanthine(in). With respect to regulation, transporter activity is sensitive to low concentrations of the inhibitor nitrobenzylmercaptopurine riboside (NBMPR). In terms of biological role, uniporter involved in the facilitative transport of nucleosides and nucleobases, and contributes to maintaining their cellular homeostasis. Functions as a Na(+)-independent transporter. Involved in the transport of nucleosides such as adenosine, guanosine, inosine, uridine, thymidine and cytidine. Also transports purine (hypoxanthine, adenine, guanine) and pyrimidine nucleobases (thymine, uracil). Mediates basolateral nucleoside uptake into Sertoli cells, thereby regulating the transport of nucleosides in testis across the blood-testis-barrier. Regulates inosine levels in brown adipocytes tissues (BAT) and extracellular inosine levels, which controls BAT-dependent energy expenditure. The sequence is that of Equilibrative nucleoside transporter 1 from Mus musculus (Mouse).